We begin with the raw amino-acid sequence, 683 residues long: DNA ligase (683 aa).

NAD(+)-binding positions include 29-33 (DAEFD), 79-80 (SL), and glutamate 109. The N6-AMP-lysine intermediate role is filled by lysine 111. Positions 132, 172, 288, and 312 each coordinate NAD(+). Zn(2+) is bound by residues cysteine 406, cysteine 409, cysteine 425, and cysteine 431. A BRCT domain is found at 595–683 (SVPRTLAGVT…GPPAEAGEPT (89 aa)).

This sequence belongs to the NAD-dependent DNA ligase family. LigA subfamily. The cofactor is Mg(2+). Requires Mn(2+) as cofactor.

The catalysed reaction is NAD(+) + (deoxyribonucleotide)n-3'-hydroxyl + 5'-phospho-(deoxyribonucleotide)m = (deoxyribonucleotide)n+m + AMP + beta-nicotinamide D-nucleotide.. DNA ligase that catalyzes the formation of phosphodiester linkages between 5'-phosphoryl and 3'-hydroxyl groups in double-stranded DNA using NAD as a coenzyme and as the energy source for the reaction. It is essential for DNA replication and repair of damaged DNA. The chain is DNA ligase from Mycobacterium ulcerans (strain Agy99).